The primary structure comprises 491 residues: N-succinylglutamate 5-semialdehyde dehydrogenase (491 aa).

225–230 provides a ligand contact to NAD(+); sequence GSSTVG. Active-site residues include glutamate 248 and cysteine 282.

Belongs to the aldehyde dehydrogenase family. AstD subfamily.

It catalyses the reaction N-succinyl-L-glutamate 5-semialdehyde + NAD(+) + H2O = N-succinyl-L-glutamate + NADH + 2 H(+). The protein operates within amino-acid degradation; L-arginine degradation via AST pathway; L-glutamate and succinate from L-arginine: step 4/5. In terms of biological role, catalyzes the NAD-dependent reduction of succinylglutamate semialdehyde into succinylglutamate. The sequence is that of N-succinylglutamate 5-semialdehyde dehydrogenase from Marinobacter nauticus (strain ATCC 700491 / DSM 11845 / VT8) (Marinobacter aquaeolei).